The chain runs to 166 residues: NAD(P)H-quinone oxidoreductase subunit I, chloroplastic (166 aa).

2 consecutive 4Fe-4S ferredoxin-type domains span residues 55–84 (GRIH…VDWK) and 95–124 (LNYS…MTEE). The [4Fe-4S] cluster site is built by Cys64, Cys67, Cys70, Cys74, Cys104, Cys107, Cys110, and Cys114.

This sequence belongs to the complex I 23 kDa subunit family. In terms of assembly, NDH is composed of at least 16 different subunits, 5 of which are encoded in the nucleus. [4Fe-4S] cluster serves as cofactor.

Its subcellular location is the plastid. It is found in the chloroplast thylakoid membrane. The enzyme catalyses a plastoquinone + NADH + (n+1) H(+)(in) = a plastoquinol + NAD(+) + n H(+)(out). It catalyses the reaction a plastoquinone + NADPH + (n+1) H(+)(in) = a plastoquinol + NADP(+) + n H(+)(out). NDH shuttles electrons from NAD(P)H:plastoquinone, via FMN and iron-sulfur (Fe-S) centers, to quinones in the photosynthetic chain and possibly in a chloroplast respiratory chain. The immediate electron acceptor for the enzyme in this species is believed to be plastoquinone. Couples the redox reaction to proton translocation, and thus conserves the redox energy in a proton gradient. This is NAD(P)H-quinone oxidoreductase subunit I, chloroplastic from Oteiza scandens (Climbing oteiza).